Consider the following 1043-residue polypeptide: Integrator complex subunit 3 (1043 aa).

M1 is modified (N-acetylmethionine). Residues S502, S537, and S995 each carry the phosphoserine modification. A disordered region spans residues 977–1043 (YEDSSTKPPK…GSSAVGSDSD (67 aa)). Residues 1008-1022 (AEEESGSSSASEEED) are compositionally biased toward acidic residues.

The protein belongs to the Integrator subunit 3 family. As to quaternary structure, component of the Integrator complex, composed of core subunits INTS1, INTS2, INTS3, INTS4, INTS5, INTS6, INTS7, INTS8, INTS9/RC74, INTS10, INTS11/CPSF3L, INTS12, INTS13, INTS14 and INTS15. The core complex associates with protein phosphatase 2A subunits PPP2CA and PPP2R1A, to form the Integrator-PP2A (INTAC) complex. Component of the SOSS complex, composed of SOSS-B (SOSS-B1/NABP2 or SOSS-B2/NABP1), SOSS-A/INTS3 and SOSS-C/INIP. SOSS complexes containing SOSS-B1/NABP2 are more abundant than complexes containing SOSS-B2/NABP1. Interacts with SOSS-B1/NABP2, SOSS-B2/NABP1 and SOSS-C/INIP; the interaction is direct. Interacts with NBN/NBS1.

The protein localises to the nucleus. It localises to the cytoplasm. Functionally, component of the integrator complex, a multiprotein complex that terminates RNA polymerase II (Pol II) transcription in the promoter-proximal region of genes. The integrator complex provides a quality checkpoint during transcription elongation by driving premature transcription termination of transcripts that are unfavorably configured for transcriptional elongation: the complex terminates transcription by (1) catalyzing dephosphorylation of the C-terminal domain (CTD) of Pol II subunit POLR2A/RPB1 and SUPT5H/SPT5, (2) degrading the exiting nascent RNA transcript via endonuclease activity and (3) promoting the release of Pol II from bound DNA. The integrator complex is also involved in terminating the synthesis of non-coding Pol II transcripts, such as enhancer RNAs (eRNAs), small nuclear RNAs (snRNAs), telomerase RNAs and long non-coding RNAs (lncRNAs). Within the integrator complex, INTS3 is involved in the post-termination step: INTS3 binds INTS7 in the open conformation of integrator complex and prevents the rebinding of Pol II to the integrator after termination cycle. Mediates recruitment of cytoplasmic dynein to the nuclear envelope, probably as component of the integrator complex. In terms of biological role, component of the SOSS complex, a multiprotein complex that functions downstream of the MRN complex to promote DNA repair and G2/M checkpoint. The SOSS complex associates with single-stranded DNA at DNA lesions and influences diverse endpoints in the cellular DNA damage response including cell-cycle checkpoint activation, recombinational repair and maintenance of genomic stability. The SOSS complex is required for efficient homologous recombination-dependent repair of double-strand breaks (DSBs) and ATM-dependent signaling pathways. In the SOSS complex, it is required for the assembly of the complex and for stabilization of the complex at DNA damage sites. In Homo sapiens (Human), this protein is Integrator complex subunit 3.